A 2314-amino-acid polypeptide reads, in one-letter code: Protein Ycf2 (2314 aa).

1653-1660 (GSIGTGRS) is an ATP binding site.

This sequence belongs to the Ycf2 family.

Its subcellular location is the plastid. The protein resides in the chloroplast stroma. In terms of biological role, probable ATPase of unknown function. Its presence in a non-photosynthetic plant (Epifagus virginiana) and experiments in tobacco indicate that it has an essential function which is probably not related to photosynthesis. This Piper cenocladum (Ant piper) protein is Protein Ycf2.